The sequence spans 506 residues: UBX domain-containing protein 4 (506 aa).

The segment at 1–199 (MLWFQGAIPA…PAEDLTVRVE (199 aa)) is interaction with UBQLN1. The Cytoplasmic segment spans residues 1 to 411 (MLWFQGAIPA…VPSSSGDIWT (411 aa)). Polar residues-rich tracts occupy residues 114–136 (SLKGETSVTNDKQSESSVSTPSA) and 177–189 (SLSQEPPGCSNQR). The disordered stretch occupies residues 114 to 193 (SLKGETSVTN…GCSNQRPAED (80 aa)). The UBX domain occupies 313–391 (DRSTIARIQF…ELAPSASVVL (79 aa)). An intramembrane segment occupies 412 to 432 (LLGTVLYPFLAIWRLISNFLF). The Cytoplasmic segment spans residues 433–506 (SNPPPAQTSA…TWNGNSTQQM (74 aa)). Positions 437–506 (PAQTSARATS…TWNGNSTQQM (70 aa)) are disordered. A compositionally biased stretch (low complexity) spans 444-456 (ATSTEPSNSASSS). Over residues 457–489 (KSEKREPVRKRVLEKRGEDFKKEGKIYRLRTQD) the composition is skewed to basic and acidic residues. Threonine 487 is subject to Phosphothreonine. The segment covering 496–506 (NTWNGNSTQQM) has biased composition (polar residues).

Directly interacts with VCP. Interacts with UBQLN1. Forms a complex with VCP and UBQLN1.

The protein localises to the endoplasmic reticulum membrane. It is found in the nucleus envelope. Involved in endoplasmic reticulum-associated protein degradation (ERAD). Acts as a platform to recruit both UBQLN1 and VCP to the ER during ERAD. This chain is UBX domain-containing protein 4 (Ubxn4), found in Rattus norvegicus (Rat).